The chain runs to 512 residues: Glycine betaine transporter OpuD (512 aa).

12 consecutive transmembrane segments (helical) span residues Ile-5–Ile-25, Phe-45–Phe-65, Phe-82–Phe-102, Phe-135–Tyr-155, Ile-186–Ala-206, Ala-222–Trp-242, Met-257–Met-277, Trp-312–Ala-332, Phe-343–Gly-363, Leu-395–Ala-415, Trp-441–Leu-461, and Thr-464–Tyr-484.

The protein belongs to the BCCT transporter (TC 2.A.15) family.

It localises to the cell membrane. With respect to regulation, activity is stimulated by high osmolarity. High-affinity uptake of glycine betaine. Does not mediate either carnitine or choline uptake. The protein is Glycine betaine transporter OpuD (opuD) of Bacillus subtilis (strain 168).